The chain runs to 81 residues: ATP synthase subunit c, chloroplastic (81 aa).

A run of 2 helical transmembrane segments spans residues 3–23 (PLIS…ASIG) and 53–73 (LLLS…VALA).

Belongs to the ATPase C chain family. As to quaternary structure, F-type ATPases have 2 components, F(1) - the catalytic core - and F(0) - the membrane proton channel. F(1) has five subunits: alpha(3), beta(3), gamma(1), delta(1), epsilon(1). F(0) has four main subunits: a(1), b(1), b'(1) and c(10-14). The alpha and beta chains form an alternating ring which encloses part of the gamma chain. F(1) is attached to F(0) by a central stalk formed by the gamma and epsilon chains, while a peripheral stalk is formed by the delta, b and b' chains.

Its subcellular location is the plastid. It localises to the chloroplast thylakoid membrane. Functionally, f(1)F(0) ATP synthase produces ATP from ADP in the presence of a proton or sodium gradient. F-type ATPases consist of two structural domains, F(1) containing the extramembraneous catalytic core and F(0) containing the membrane proton channel, linked together by a central stalk and a peripheral stalk. During catalysis, ATP synthesis in the catalytic domain of F(1) is coupled via a rotary mechanism of the central stalk subunits to proton translocation. In terms of biological role, key component of the F(0) channel; it plays a direct role in translocation across the membrane. A homomeric c-ring of between 10-14 subunits forms the central stalk rotor element with the F(1) delta and epsilon subunits. The polypeptide is ATP synthase subunit c, chloroplastic (Angiopteris evecta (Mule's foot fern)).